Here is a 175-residue protein sequence, read N- to C-terminus: Riboflavin kinase (175 aa).

A CDP-binding site is contributed by 54–59; that stretch reads GLGEGK. Mg(2+)-binding residues include T83 and N85. FMN-binding residues include T142 and E150. 155–158 lines the CDP pocket; it reads FHLR.

This sequence belongs to the archaeal riboflavin kinase family. It depends on Mg(2+) as a cofactor.

The catalysed reaction is riboflavin + CTP = CDP + FMN + H(+). It participates in cofactor biosynthesis; FMN biosynthesis; FMN from riboflavin (CTP route): step 1/1. Its function is as follows. Catalyzes the CTP-dependent phosphorylation of riboflavin (vitamin B2) to form flavin mononucleotide (FMN). The polypeptide is Riboflavin kinase (Saccharolobus solfataricus (strain ATCC 35092 / DSM 1617 / JCM 11322 / P2) (Sulfolobus solfataricus)).